A 227-amino-acid chain; its full sequence is Bone marrow proteoglycan (227 aa).

The signal sequence occupies residues 1-16 (MKFPLLLALLVGGAFA). The propeptide at 17–110 (LHLSSEASDS…TSLMGDSGFK (94 aa)) is acidic. The disordered stretch occupies residues 21–105 (SEASDSKSPL…KEEDTTSLMG (85 aa)). The O-linked (GalNAc...) serine glycan is linked to Ser24. The span at 34 to 46 (SLPREAEISRPEV) shows a compositional bias: basic and acidic residues. The segment covering 58-70 (LEEEEEEEEEEGS) has biased composition (acidic residues). An O-linked (Xyl...) (chondroitin sulfate) serine glycan is attached at Ser70. One can recognise a C-type lectin domain in the interval 128 to 227 (LVCRSCYRGT…GKRRPFICAY (100 aa)). Cystine bridges form between Cys130/Cys225 and Cys202/Cys217.

In terms of processing, nitrated.

It is found in the secreted. Functionally, cytotoxin and helminthotoxin. MBP also induces non-cytolytic histamine release from basophils. It is involved in antiparasitic defense mechanisms and immune hypersensitivity reactions. The chain is Bone marrow proteoglycan (Prg2) from Rattus norvegicus (Rat).